Consider the following 354-residue polypeptide: Protein RecA (354 aa).

67–74 contributes to the ATP binding site; the sequence is GPESSGKT. A disordered region spans residues 331–354; sequence NQDSTPDFSVDDNGEGVKETNEDF. Residues 345–354 are compositionally biased toward basic and acidic residues; that stretch reads EGVKETNEDF.

The protein belongs to the RecA family.

The protein resides in the cytoplasm. Its function is as follows. Can catalyze the hydrolysis of ATP in the presence of single-stranded DNA, the ATP-dependent uptake of single-stranded DNA by duplex DNA, and the ATP-dependent hybridization of homologous single-stranded DNAs. It interacts with LexA causing its activation and leading to its autocatalytic cleavage. This chain is Protein RecA, found in Citrobacter koseri (strain ATCC BAA-895 / CDC 4225-83 / SGSC4696).